The sequence spans 1503 residues: Translocase of chloroplast 159, chloroplastic (1503 aa).

A compositionally biased stretch (polar residues) spans 1 to 24 (MDSKSVTPEPTNPFYASSGQSGKT). Positions 1 to 210 (MDSKSVTPEP…GGKVDVDDKS (210 aa)) are disordered. The helical transmembrane segment at 21 to 37 (SGKTYASVVAAAAAAAA) threads the bilayer. At serine 71 the chain carries Phosphoserine. Basic and acidic residues-rich tracts occupy residues 85 to 98 (KVSDEVDGSLKEDS) and 176 to 210 (SESKVKDVEEEDVGTKKDDEGESELGGKVDVDDKS). Phosphoserine occurs at positions 210, 281, and 288. Disordered stretches follow at residues 298 to 338 (KFTS…DVEK) and 429 to 464 (VHNKFDPIGQGEGGEVELESDKATEEGGGKLVSEGD). Residues 447 to 456 (ESDKATEEGG) show a composition bias toward basic and acidic residues. Phosphoserine occurs at positions 448, 461, 589, 609, 630, 632, and 665. Residues 610 to 633 (FGGKEVDQEPSGEGVTRVDGSESE) form a disordered region. Residues 781–804 (EEEKQKLEKLQSLRVKFLRLLQRL) adopt a coiled-coil conformation. In terms of domain architecture, AIG1-type G spans 853 to 1087 (IFSLNILVLG…RPQEPLDHRK (235 aa)). Residues 862 to 869 (GKAGVGKS) form a G1 region. Residues 865-870 (GVGKSA) and 884-889 (DAFGLS) contribute to the GTP site. Residue serine 869 participates in Mg(2+) binding. The segment at 884-887 (DAFG) is homodimerization. Residues 889-893 (STTSV) are G2. The tract at residues 909-912 (DTPG) is G3. The interval 947–952 (RLDTQT) is homodimerization. The interval 981–984 (THAA) is G4. GTP is bound by residues histidine 982 and 1035 to 1036 (EN). A G5 region spans residues 1035-1037 (ENH). The stretch at 1175 to 1203 (DYRVKLLQKKQWREELKRMKEMKKNGKKL) forms a coiled coil. Residues 1203-1222 (LGESEFGYPGEEDDPENGAP) form a disordered region.

It belongs to the TRAFAC class TrmE-Era-EngA-EngB-Septin-like GTPase superfamily. AIG1/Toc34/Toc159-like paraseptin GTPase family. TOC159 subfamily. As to quaternary structure, homodimer and heterodimer with TOC33. Part of the TOC core complex that includes 1 protein for the specific recognition of transit peptides surrounded by a ring composed of four proteins forming translocation channels, and four to five GTP-binding proteins providing energy. This core complex can interact with components of the TIC complex to form a larger import complex. Chloroplastic protein precursor such as prSS (precursor of the RuBisCO small subunit) interacts with these complexes. The TOC complex contains a specific subset of polar lipids such as digalactosyldiacylglyceride (DGDG), phosphatidylcholine (PC) and phosphatidylglycerol (PG). Interacts with SP1. Mg(2+) serves as cofactor. Post-translationally, phosphorylated by KOC1.

The protein localises to the plastid. It is found in the chloroplast outer membrane. Its subcellular location is the cytoplasm. Functionally, GTPase involved in protein precursor import into chloroplasts. Seems to recognize chloroplast-destined precursor proteins and regulate their presentation to the translocation channel through GTP hydrolysis. Required for chloroplast biogenesis. Probably specialized in the import of nuclear encoded photosynthetic preproteins from the cytoplasm to the chloroplast. This Arabidopsis thaliana (Mouse-ear cress) protein is Translocase of chloroplast 159, chloroplastic.